The primary structure comprises 131 residues: uncharacterized protein (131 aa).

The disordered stretch occupies residues Asn99–Phe131. The span at Gln102–Glu113 shows a compositional bias: acidic residues. Residues Lys114 to Phe131 are compositionally biased toward basic and acidic residues.

This is an uncharacterized protein from Sulfolobus islandicus rod-shaped virus 1 (SIRV-1).